A 183-amino-acid polypeptide reads, in one-letter code: Orotate phosphoribosyltransferase (183 aa).

5-phospho-alpha-D-ribose 1-diphosphate-binding positions include Arg100, Lys101, Lys104, His106, and 126–134 (EDVVTTGSS). Orotate contacts are provided by Thr130 and Arg158.

The protein belongs to the purine/pyrimidine phosphoribosyltransferase family. PyrE subfamily. In terms of assembly, homodimer. Requires Mg(2+) as cofactor.

The enzyme catalyses orotidine 5'-phosphate + diphosphate = orotate + 5-phospho-alpha-D-ribose 1-diphosphate. It participates in pyrimidine metabolism; UMP biosynthesis via de novo pathway; UMP from orotate: step 1/2. Functionally, catalyzes the transfer of a ribosyl phosphate group from 5-phosphoribose 1-diphosphate to orotate, leading to the formation of orotidine monophosphate (OMP). This is Orotate phosphoribosyltransferase from Aquifex aeolicus (strain VF5).